Consider the following 598-residue polypeptide: Arylsulfate sulfotransferase AssT (598 aa).

The signal sequence occupies residues 1–27 (MFHPYRKTLLSGTVALALGLFATGAIA). Positions 279 and 383 each coordinate 4-methylumbelliferone. Cysteine 445 and cysteine 451 form a disulfide bridge. Position 463 (histidine 463) interacts with 4-methylumbelliferone. Histidine 463 functions as the Nucleophile; sulfurylated histidine covalent intermediate in the catalytic mechanism.

It belongs to the aryl sulfotransferase family. Monomer.

The protein localises to the periplasm. It catalyses the reaction an aryl sulfate + a phenol = an aryl sulfate + a phenol. The catalysed reaction is 4-methylumbelliferone sulfate + phenol = phenyl sulfate + 4-methylumbelliferone. It carries out the reaction 2-naphthyl sulfate + phenol = phenyl sulfate + 2-naphthol. Functionally, catalyzes the transfer of a sulfate group from a phenyl sulfate ester to other phenolic compounds. Is able to use several substrate donors and acceptors in vitro: using phenol as an acceptor substrate, 4-methylumbelliferyl sulfate is the best donor substrate, followed by beta-naphthyl sulfate, p-nitrophenyl sulfate (PNS), and alpha-naphthyl sulfate; using PNS as a donor substrate, alpha-naphthol is the best acceptor substrate, followed by phenol, resorcinol, p-acetaminophen, tyramine, and tyrosine. Cannot use 3'-phosphoadenosine-5'-phophosulfate (PAPS), the donor substrate of mammalian sulfotransferase. May be a detoxifying enzyme, converting toxic phenolic compounds into non-toxic materials. This chain is Arylsulfate sulfotransferase AssT, found in Lelliottia amnigena (Enterobacter amnigenus).